The following is a 199-amino-acid chain: Octanoyltransferase (199 aa).

Residues 27-199 (SNSYDELWLL…FVQYFLTQFK (173 aa)) enclose the BPL/LPL catalytic domain. Residues 66-73 (RGGQVTYH), 133-135 (SIG), and 146-148 (GIA) each bind substrate. The active-site Acyl-thioester intermediate is Cys-164.

Belongs to the LipB family.

The protein localises to the cytoplasm. The enzyme catalyses octanoyl-[ACP] + L-lysyl-[protein] = N(6)-octanoyl-L-lysyl-[protein] + holo-[ACP] + H(+). It functions in the pathway protein modification; protein lipoylation via endogenous pathway; protein N(6)-(lipoyl)lysine from octanoyl-[acyl-carrier-protein]: step 1/2. Functionally, catalyzes the transfer of endogenously produced octanoic acid from octanoyl-acyl-carrier-protein onto the lipoyl domains of lipoate-dependent enzymes. Lipoyl-ACP can also act as a substrate although octanoyl-ACP is likely to be the physiological substrate. The sequence is that of Octanoyltransferase from Legionella pneumophila (strain Lens).